The primary structure comprises 128 residues: MPTIQQLIRRGRTTKASKTASPALEKCPQKRGVCTRVYTTTPKKPNSALRKVARVRLSNKIEVTAYIPGEGHNLQEHSIVLIRGGRVKDLPGVRYHIVRGSLDTSGVADRRQGRSKYGAKRPKGAAAK.

At aspartate 89 the chain carries 3-methylthioaspartic acid. The tract at residues 101-128 is disordered; that stretch reads SLDTSGVADRRQGRSKYGAKRPKGAAAK. A compositionally biased stretch (basic residues) spans 113-128; that stretch reads GRSKYGAKRPKGAAAK.

The protein belongs to the universal ribosomal protein uS12 family. As to quaternary structure, part of the 30S ribosomal subunit. Contacts proteins S8 and S17. May interact with IF1 in the 30S initiation complex.

Functionally, with S4 and S5 plays an important role in translational accuracy. Its function is as follows. Interacts with and stabilizes bases of the 16S rRNA that are involved in tRNA selection in the A site and with the mRNA backbone. Located at the interface of the 30S and 50S subunits, it traverses the body of the 30S subunit contacting proteins on the other side and probably holding the rRNA structure together. The combined cluster of proteins S8, S12 and S17 appears to hold together the shoulder and platform of the 30S subunit. The sequence is that of Small ribosomal subunit protein uS12 from Prosthecochloris aestuarii (strain DSM 271 / SK 413).